The primary structure comprises 159 residues: Phosphopantetheine adenylyltransferase (159 aa).

Substrate is bound at residue Thr-10. ATP-binding positions include 10-11 (TF) and His-18. 3 residues coordinate substrate: Lys-42, Leu-73, and Arg-87. Residues 88-90 (GLR), Glu-98, and 123-129 (YSYVSGT) each bind ATP.

It belongs to the bacterial CoaD family. Homohexamer. Mg(2+) serves as cofactor.

It is found in the cytoplasm. The enzyme catalyses (R)-4'-phosphopantetheine + ATP + H(+) = 3'-dephospho-CoA + diphosphate. The protein operates within cofactor biosynthesis; coenzyme A biosynthesis; CoA from (R)-pantothenate: step 4/5. Its function is as follows. Reversibly transfers an adenylyl group from ATP to 4'-phosphopantetheine, yielding dephospho-CoA (dPCoA) and pyrophosphate. The chain is Phosphopantetheine adenylyltransferase from Coxiella burnetii (strain CbuK_Q154) (Coxiella burnetii (strain Q154)).